Reading from the N-terminus, the 299-residue chain is Serine/threonine-protein kinase 1 (299 aa).

The region spanning 39–277 (IATKPMFEGG…FKGLVSHPWF (239 aa)) is the Protein kinase domain. Residues 45-53 (FEGGRRNNV) and Lys66 each bind ATP. Asp153 serves as the catalytic Proton acceptor.

Belongs to the protein kinase superfamily. Ser/Thr protein kinase family.

The protein localises to the virion. It localises to the host cytoplasm. The enzyme catalyses L-seryl-[protein] + ATP = O-phospho-L-seryl-[protein] + ADP + H(+). It carries out the reaction L-threonyl-[protein] + ATP = O-phospho-L-threonyl-[protein] + ADP + H(+). Functionally, essential for viral replication. It may mediate the virus progression through DNA replication. This chain is Serine/threonine-protein kinase 1, found in African swine fever virus (isolate Tick/Malawi/Lil 20-1/1983) (ASFV).